Consider the following 235-residue polypeptide: Lipoprotein signal peptidase (235 aa).

Residues 1–23 (MTDETSGPAEPVTDAPGDAESPA) are disordered. 3 helical membrane-spanning segments follow: residues 31-51 (LLLT…VLAV), 84-104 (GYTW…IWMG), and 108-128 (VSPW…GNLV). Active-site residues include Asp-144 and Asp-158. Residues 156–176 (VADPSVVGGAILLVALSLFGF) traverse the membrane as a helical segment. The interval 185–235 (RPGEDAEPSAGASDSTPEAPAADGPDKPAGPVGPEDAAEESKTVGHQAEPS) is disordered. Residues 201–218 (PEAPAADGPDKPAGPVGP) are compositionally biased toward low complexity.

The protein belongs to the peptidase A8 family.

The protein resides in the cell membrane. It carries out the reaction Release of signal peptides from bacterial membrane prolipoproteins. Hydrolyzes -Xaa-Yaa-Zaa-|-(S,diacylglyceryl)Cys-, in which Xaa is hydrophobic (preferably Leu), and Yaa (Ala or Ser) and Zaa (Gly or Ala) have small, neutral side chains.. Its pathway is protein modification; lipoprotein biosynthesis (signal peptide cleavage). In terms of biological role, this protein specifically catalyzes the removal of signal peptides from prolipoproteins. This chain is Lipoprotein signal peptidase, found in Mycolicibacterium smegmatis (strain ATCC 700084 / mc(2)155) (Mycobacterium smegmatis).